Consider the following 353-residue polypeptide: Uroporphyrinogen decarboxylase (353 aa).

Substrate-binding positions include 30–34 (RQAGR), D79, Y154, S209, and H332.

This sequence belongs to the uroporphyrinogen decarboxylase family. In terms of assembly, homodimer.

Its subcellular location is the cytoplasm. The enzyme catalyses uroporphyrinogen III + 4 H(+) = coproporphyrinogen III + 4 CO2. It participates in porphyrin-containing compound metabolism; protoporphyrin-IX biosynthesis; coproporphyrinogen-III from 5-aminolevulinate: step 4/4. Catalyzes the decarboxylation of four acetate groups of uroporphyrinogen-III to yield coproporphyrinogen-III. The polypeptide is Uroporphyrinogen decarboxylase (Mycolicibacterium smegmatis (strain ATCC 700084 / mc(2)155) (Mycobacterium smegmatis)).